The following is a 251-amino-acid chain: Cell division protein ZapD (251 aa).

It belongs to the ZapD family. Interacts with FtsZ.

It localises to the cytoplasm. Cell division factor that enhances FtsZ-ring assembly. Directly interacts with FtsZ and promotes bundling of FtsZ protofilaments, with a reduction in FtsZ GTPase activity. The sequence is that of Cell division protein ZapD from Azoarcus sp. (strain BH72).